We begin with the raw amino-acid sequence, 166 residues long: MSQATKRKHVVKEVLGEHMVPSDQQQIVRVLRTPGNNLHEVETAQGQRFLVSMPSKYRKNIWIKRGDFLIVDPIEEGEKVKAEISFVLCKDHVRSLQKDGHWPEAFSQVTEKDNNDRNRQTQPELPAEPQSSGEESSSEDDSDLFVNTNRRQYHESEEESEEEEAA.

Residues 5 to 89 enclose the S1-like domain; sequence TKRKHVVKEV…VKAEISFVLC (85 aa). Residues 6–12 carry the Nuclear localization signal motif; the sequence is KRKHVVK. T33 bears the Phosphothreonine mark. The Nuclear localization signal signature appears at 56 to 65; sequence KYRKNIWIKR. The segment at 99 to 166 is disordered; sequence DGHWPEAFSQ…EEESEEEEAA (68 aa). Basic and acidic residues predominate over residues 110–119; that stretch reads TEKDNNDRNR. Phosphoserine occurs at positions 132, 136, 137, 138, 156, and 160. Over residues 156 to 166 the composition is skewed to acidic residues; the sequence is SEEESEEEEAA.

It belongs to the EIF1AD family. In terms of assembly, interacts with GAPDH and STAT1.

The protein resides in the nucleus. Its function is as follows. Plays a role into cellular response to oxidative stress. Decreases cell proliferation. This Bos taurus (Bovine) protein is Probable RNA-binding protein EIF1AD (EIF1AD).